Reading from the N-terminus, the 310-residue chain is Glucan endo-1,3-beta-glucosidase GI (310 aa).

The Proton donor role is filled by E96. E234 (nucleophile) is an active-site residue.

It belongs to the glycosyl hydrolase 17 family. As to quaternary structure, monomer. As to expression, young leaves and roots.

It carries out the reaction Hydrolysis of (1-&gt;3)-beta-D-glucosidic linkages in (1-&gt;3)-beta-D-glucans.. In terms of biological role, may provide a degree of protection against microbial invasion of germinated barley grain through its ability to degrade fungal cell wall polysaccharides. Does not hydrolyze (1,3;1,4)-beta-D-glucans, (1,6)-beta-D-glucan, CM-cellulose, insoluble (1,3)-beta-D-glucans or aryl beta-D-glycosides. This chain is Glucan endo-1,3-beta-glucosidase GI, found in Hordeum vulgare (Barley).